The primary structure comprises 388 residues: Chorismate synthase (388 aa).

NADP(+)-binding residues include Arg39 and Arg45. Residues 130 to 132 (RSS), 251 to 252 (NA), Gly296, 311 to 315 (KPIPT), and Arg337 contribute to the FMN site.

It belongs to the chorismate synthase family. In terms of assembly, homotetramer. It depends on FMNH2 as a cofactor.

It carries out the reaction 5-O-(1-carboxyvinyl)-3-phosphoshikimate = chorismate + phosphate. The protein operates within metabolic intermediate biosynthesis; chorismate biosynthesis; chorismate from D-erythrose 4-phosphate and phosphoenolpyruvate: step 7/7. Functionally, catalyzes the anti-1,4-elimination of the C-3 phosphate and the C-6 proR hydrogen from 5-enolpyruvylshikimate-3-phosphate (EPSP) to yield chorismate, which is the branch point compound that serves as the starting substrate for the three terminal pathways of aromatic amino acid biosynthesis. This reaction introduces a second double bond into the aromatic ring system. This Streptococcus suis (strain 98HAH33) protein is Chorismate synthase.